The chain runs to 200 residues: Small ribosomal subunit protein mS26 (200 aa).

Residues 1–27 (MLRALNRLAARPETRPPTPLLLPVRGR) constitute a mitochondrion transit peptide. The tract at residues 1–44 (MLRALNRLAARPETRPPTPLLLPVRGRKTRHDPPAKSKVGRVQT) is disordered. Lys-159 carries the N6-acetyllysine modification.

It belongs to the mitochondrion-specific ribosomal protein mS26 family. Component of the mitochondrial ribosome small subunit (28S) which comprises a 12S rRNA and about 30 distinct proteins.

The protein resides in the mitochondrion. The sequence is that of Small ribosomal subunit protein mS26 (Mrps26) from Mus musculus (Mouse).